Consider the following 526-residue polypeptide: Putative ankyrin repeat protein R840 (526 aa).

15 ANK repeats span residues 78–107 (TLNE…NIRS), 108–137 (RDNF…DIRS), 139–167 (KNYA…NIRD), 169–197 (DNCA…DSTS), 198–227 (NFNE…RCRN), 229–255 (SAII…NIRI), 256–285 (DDDY…NIRS), 286–315 (EIDH…DIKS), 317–345 (YDRS…NIRN), 346–375 (INDY…NIRV), 376–405 (DNDS…DIRV), 406–435 (NNYQ…NVSI), 437–467 (NVPL…DINL), 468–497 (ADDM…NVRA), and 499–526 (NDYA…AILS).

The sequence is that of Putative ankyrin repeat protein R840 from Acanthamoeba polyphaga (Amoeba).